The following is a 123-amino-acid chain: Fluoride-specific ion channel FluC (123 aa).

Transmembrane regions (helical) follow at residues 5-25 (IIAL…YISG), 35-55 (IGTL…YGLL), 67-87 (IFLG…SYET), and 100-120 (FANI…GFIL). Na(+)-binding residues include Gly75 and Ser78.

Belongs to the fluoride channel Fluc/FEX (TC 1.A.43) family.

It is found in the cell membrane. The catalysed reaction is fluoride(in) = fluoride(out). Its activity is regulated as follows. Na(+) is not transported, but it plays an essential structural role and its presence is essential for fluoride channel function. Fluoride-specific ion channel. Important for reducing fluoride concentration in the cell, thus reducing its toxicity. The protein is Fluoride-specific ion channel FluC of Pyrococcus horikoshii (strain ATCC 700860 / DSM 12428 / JCM 9974 / NBRC 100139 / OT-3).